Reading from the N-terminus, the 761-residue chain is Zinc finger protein 287 (761 aa).

The SCAN box domain occupies 49-131 (RQNFRNFPYP…TLVEDLTQIL (83 aa)). Residues 134–154 (EAPQNSTLSQDTPEEDPRGKH) form a disordered region. The 69-residue stretch at 170–238 (MTFKDVAVDI…IKEILEGPSP (69 aa)) folds into the KRAB domain. 14 consecutive C2H2-type zinc fingers follow at residues 368 to 390 (YKCNVCGKKFRKYPSLLKHQSTH), 396 to 418 (YECEECGKEFRHISSLIAHQRMH), 424 to 446 (YECHQCGKAFSQRAHLTIHQRIH), 452 to 474 (YKCDDCGKDFSQRAHLTIHQRTH), 480 to 502 (YKCLECGKTFSHSSSLINHQRVH), 508 to 530 (YICNECGKTFSQSTHLLQHQKIH), 536 to 558 (YKCNECWKVFSQSTYLIRHQRIH), 564 to 586 (YKCNECGKAFAHSSTLIQHQTTH), 592 to 614 (YICNICGKAFSQSANLTQHHRTH), 620 to 642 (YKCSVCGKAFSQSVHLTQHQRIH), 648 to 670 (FKCNICGKAYRQGANLTQHQRIH), 676 to 698 (YKCNECGKAFIYSSSLNQHQRTH), 704 to 726 (YKCNECDKDFSQRTCLIQHQRIH), and 732 to 754 (YACRICGKTFTQSTNLIQHQRVH).

It belongs to the krueppel C2H2-type zinc-finger protein family.

It localises to the nucleus. In terms of biological role, may be involved in transcriptional regulation. This Homo sapiens (Human) protein is Zinc finger protein 287.